A 370-amino-acid polypeptide reads, in one-letter code: UDP-N-acetylglucosamine--N-acetylmuramyl-(pentapeptide) pyrophosphoryl-undecaprenol N-acetylglucosamine transferase (370 aa).

UDP-N-acetyl-alpha-D-glucosamine contacts are provided by residues 10-12, asparagine 126, serine 200, isoleucine 255, and glutamine 300; that span reads TGG.

It belongs to the glycosyltransferase 28 family. MurG subfamily.

The protein resides in the cell membrane. The enzyme catalyses Mur2Ac(oyl-L-Ala-gamma-D-Glu-L-Lys-D-Ala-D-Ala)-di-trans,octa-cis-undecaprenyl diphosphate + UDP-N-acetyl-alpha-D-glucosamine = beta-D-GlcNAc-(1-&gt;4)-Mur2Ac(oyl-L-Ala-gamma-D-Glu-L-Lys-D-Ala-D-Ala)-di-trans,octa-cis-undecaprenyl diphosphate + UDP + H(+). It participates in cell wall biogenesis; peptidoglycan biosynthesis. In terms of biological role, cell wall formation. Catalyzes the transfer of a GlcNAc subunit on undecaprenyl-pyrophosphoryl-MurNAc-pentapeptide (lipid intermediate I) to form undecaprenyl-pyrophosphoryl-MurNAc-(pentapeptide)GlcNAc (lipid intermediate II). The chain is UDP-N-acetylglucosamine--N-acetylmuramyl-(pentapeptide) pyrophosphoryl-undecaprenol N-acetylglucosamine transferase from Lactobacillus johnsonii (strain CNCM I-12250 / La1 / NCC 533).